We begin with the raw amino-acid sequence, 293 residues long: Shikimate dehydrogenase (NADP(+)) (293 aa).

Shikimate contacts are provided by residues 26–28 (SKS) and threonine 73. The active-site Proton acceptor is the lysine 77. Glutamate 89 is a binding site for NADP(+). Residues asparagine 98 and aspartate 113 each contribute to the shikimate site. NADP(+) contacts are provided by residues 137 to 141 (GAGGA), 161 to 166 (NRTRQR), and isoleucine 231. Tyrosine 233 serves as a coordination point for shikimate. Glycine 254 is a binding site for NADP(+).

This sequence belongs to the shikimate dehydrogenase family. Homodimer.

It carries out the reaction shikimate + NADP(+) = 3-dehydroshikimate + NADPH + H(+). It functions in the pathway metabolic intermediate biosynthesis; chorismate biosynthesis; chorismate from D-erythrose 4-phosphate and phosphoenolpyruvate: step 4/7. In terms of biological role, involved in the biosynthesis of the chorismate, which leads to the biosynthesis of aromatic amino acids. Catalyzes the reversible NADPH linked reduction of 3-dehydroshikimate (DHSA) to yield shikimate (SA). The sequence is that of Shikimate dehydrogenase (NADP(+)) from Bartonella quintana (strain Toulouse) (Rochalimaea quintana).